The chain runs to 104 residues: Ig lambda-3 chain C region (104 aa).

The region spanning 6–99 (PTLTMFPPSP…EGDTVEKSLS (94 aa)) is the Ig-like domain. C27 and C85 are disulfide-bonded.

This is Ig lambda-3 chain C region (Iglc3) from Mus musculus (Mouse).